The following is a 318-amino-acid chain: Ribonuclease Z (318 aa).

The Zn(2+) site is built by H62, H64, D66, H67, H140, D211, and H269. D66 (proton acceptor) is an active-site residue.

This sequence belongs to the RNase Z family. Homodimer. It depends on Zn(2+) as a cofactor.

It carries out the reaction Endonucleolytic cleavage of RNA, removing extra 3' nucleotides from tRNA precursor, generating 3' termini of tRNAs. A 3'-hydroxy group is left at the tRNA terminus and a 5'-phosphoryl group is left at the trailer molecule.. Functionally, zinc phosphodiesterase, which displays some tRNA 3'-processing endonuclease activity. Probably involved in tRNA maturation, by removing a 3'-trailer from precursor tRNA. In Brevibacillus brevis (strain 47 / JCM 6285 / NBRC 100599), this protein is Ribonuclease Z.